The primary structure comprises 517 residues: Tyrosine 3-monooxygenase (517 aa).

At serine 33 the chain carries Phosphoserine; by PKA. Histidine 345, histidine 350, and glutamate 390 together coordinate Fe cation.

This sequence belongs to the biopterin-dependent aromatic amino acid hydroxylase family. Fe(2+) serves as cofactor.

The protein resides in the cytoplasm. The protein localises to the perinuclear region. It localises to the cell projection. It is found in the axon. It catalyses the reaction (6R)-L-erythro-5,6,7,8-tetrahydrobiopterin + L-tyrosine + O2 = (4aS,6R)-4a-hydroxy-L-erythro-5,6,7,8-tetrahydrobiopterin + L-dopa. It functions in the pathway catecholamine biosynthesis; dopamine biosynthesis; dopamine from L-tyrosine: step 1/2. Phosphorylation leads to an increase in the catalytic activity. Its function is as follows. Involved in the synthesis of catecholamines, such as dopamine. Has a role in serotonin signaling. Required for normal explorative and foraging behavior. The protein is Tyrosine 3-monooxygenase (cat-2) of Caenorhabditis briggsae.